A 47-amino-acid polypeptide reads, in one-letter code: Large ribosomal subunit protein bL34 (47 aa).

The protein belongs to the bacterial ribosomal protein bL34 family.

In Corynebacterium jeikeium (strain K411), this protein is Large ribosomal subunit protein bL34.